A 499-amino-acid polypeptide reads, in one-letter code: Aspartyl/glutamyl-tRNA(Asn/Gln) amidotransferase subunit B (499 aa).

This sequence belongs to the GatB/GatE family. GatB subfamily. In terms of assembly, heterotrimer of A, B and C subunits.

It catalyses the reaction L-glutamyl-tRNA(Gln) + L-glutamine + ATP + H2O = L-glutaminyl-tRNA(Gln) + L-glutamate + ADP + phosphate + H(+). It carries out the reaction L-aspartyl-tRNA(Asn) + L-glutamine + ATP + H2O = L-asparaginyl-tRNA(Asn) + L-glutamate + ADP + phosphate + 2 H(+). In terms of biological role, allows the formation of correctly charged Asn-tRNA(Asn) or Gln-tRNA(Gln) through the transamidation of misacylated Asp-tRNA(Asn) or Glu-tRNA(Gln) in organisms which lack either or both of asparaginyl-tRNA or glutaminyl-tRNA synthetases. The reaction takes place in the presence of glutamine and ATP through an activated phospho-Asp-tRNA(Asn) or phospho-Glu-tRNA(Gln). The protein is Aspartyl/glutamyl-tRNA(Asn/Gln) amidotransferase subunit B of Mesorhizobium japonicum (strain LMG 29417 / CECT 9101 / MAFF 303099) (Mesorhizobium loti (strain MAFF 303099)).